The sequence spans 355 residues: Septin-2B (355 aa).

One can recognise a Septin-type G domain in the interval K33–K305. Positions G43–S50 are G1 motif. GTP is bound by residues G43–S50, T77, G103, K182–E190, G240, and R255. The tract at residues D100–G103 is G3 motif. The tract at residues A181–D184 is G4 motif. The important for dimerization stretch occupies residues W259–H269.

The protein belongs to the TRAFAC class TrmE-Era-EngA-EngB-Septin-like GTPase superfamily. Septin GTPase family. Septins polymerize into heterooligomeric protein complexes that form filaments, and associate with cellular membranes, actin filaments and microtubules. GTPase activity is required for filament formation. Can form heterooligomers with other family members and form filaments. Interacts with wdpcp.

It localises to the cytoplasm. The protein resides in the cytoskeleton. The protein localises to the spindle. It is found in the cleavage furrow. Its subcellular location is the midbody. It localises to the cell cortex. The protein resides in the cell projection. The protein localises to the cilium membrane. Its function is as follows. Filament-forming cytoskeletal GTPase. Required for normal organization of the actin cytoskeleton. Plays a role in the biogenesis of polarized columnar-shaped epithelium. Required for the progression through mitosis through regulation of chromosome congression. During anaphase, may be required for chromosome segregation and spindle elongation. Plays a role in ciliogenesis and collective cell movements including convergent extension during gastrulation. In cilia, required for the integrity of the diffusion barrier at the base of the primary cilium that prevents diffusion of transmembrane proteins between the cilia and plasma membranes. Controls cell shape and not polarization of cells during convergent extension. The chain is Septin-2B (sept2-B) from Xenopus tropicalis (Western clawed frog).